The chain runs to 228 residues: PKHD-type hydroxylase YbiX (228 aa).

The region spanning 78–177 (TLSTPLFNRY…RVASFIWIQS (100 aa)) is the Fe2OG dioxygenase domain. Fe cation is bound by residues histidine 96, aspartate 98, and histidine 158. Arginine 168 lines the 2-oxoglutarate pocket.

Requires Fe(2+) as cofactor. It depends on L-ascorbate as a cofactor.

In Escherichia coli O157:H7, this protein is PKHD-type hydroxylase YbiX.